Reading from the N-terminus, the 361-residue chain is tRNA/tmRNA (uracil-C(5))-methyltransferase (361 aa).

Positions 185, 213, 218, 234, and 294 each coordinate S-adenosyl-L-methionine. Residue Cys319 is the Nucleophile of the active site. Glu353 functions as the Proton acceptor in the catalytic mechanism.

This sequence belongs to the class I-like SAM-binding methyltransferase superfamily. RNA M5U methyltransferase family. TrmA subfamily.

It carries out the reaction uridine(54) in tRNA + S-adenosyl-L-methionine = 5-methyluridine(54) in tRNA + S-adenosyl-L-homocysteine + H(+). The enzyme catalyses uridine(341) in tmRNA + S-adenosyl-L-methionine = 5-methyluridine(341) in tmRNA + S-adenosyl-L-homocysteine + H(+). In terms of biological role, dual-specificity methyltransferase that catalyzes the formation of 5-methyluridine at position 54 (m5U54) in all tRNAs, and that of position 341 (m5U341) in tmRNA (transfer-mRNA). The protein is tRNA/tmRNA (uracil-C(5))-methyltransferase of Pseudomonas savastanoi pv. phaseolicola (strain 1448A / Race 6) (Pseudomonas syringae pv. phaseolicola (strain 1448A / Race 6)).